The chain runs to 337 residues: Secreted effector protein EspF(U) (337 aa).

5 consecutive repeat copies span residues 96–142 (IKPA…AEHG), 143–189 (IQPA…AEHG), 190–236 (IQPA…AEHG), 237–283 (IQPA…AEHG), and 284–330 (IQPA…AEHG). The interval 96-330 (IKPARSMAEH…RLMQHLAEHG (235 aa)) is 5 X 48 AA approximate tandem repeats. The interval 291 to 312 (AEHIPPAPNWPAPTPPVQNEQS) is disordered. A compositionally biased stretch (pro residues) spans 295–306 (PPAPNWPAPTPP).

Belongs to the EspF(U)/TccP family. As to quaternary structure, interacts with host BAIAP2 and host WASL/N-WASP. Can also interact with host proteins BAIAP2L1 and WAS/WASP.

The protein localises to the secreted. Its subcellular location is the host cytoplasm. Functionally, required for efficient pedestal formation in host epithelial cells during infection. Acts as an intermediate between Tir (via host BAIAP2) and host WASL/N-WASP. Directly binds and activates WASL/N-WASP, which stimulates actin polymerization and leads to the formation of actin pedestals at the sites of bacterial adhesion. This chain is Secreted effector protein EspF(U) (espF(U)), found in Escherichia coli O157:H7.